The primary structure comprises 277 residues: Putative phosphoenolpyruvate synthase regulatory protein (277 aa).

Position 157-164 (157-164 (GVSRSGKT)) interacts with ADP.

This sequence belongs to the pyruvate, phosphate/water dikinase regulatory protein family. PSRP subfamily.

It catalyses the reaction [pyruvate, water dikinase] + ADP = [pyruvate, water dikinase]-phosphate + AMP + H(+). It carries out the reaction [pyruvate, water dikinase]-phosphate + phosphate + H(+) = [pyruvate, water dikinase] + diphosphate. Bifunctional serine/threonine kinase and phosphorylase involved in the regulation of the phosphoenolpyruvate synthase (PEPS) by catalyzing its phosphorylation/dephosphorylation. The chain is Putative phosphoenolpyruvate synthase regulatory protein from Vibrio atlanticus (strain LGP32) (Vibrio splendidus (strain Mel32)).